The chain runs to 293 residues: MTSSIFRTIGIIGHSSYPKAINTYDVLYRWLYNKGIKVMIEQHASHLLRTHKAIIGNLHDIGDYADLAIVIGGDGNMLRAANVLSQYDIKIIGINLGNLGFLTDLNPHSALIELSKILSGHFINEKRFLLDIKIQHYNNVTILGTAINEVILYTNTIKNMIKFELYINNNFTFSSRSDGLIIATPTGSTAYALSAGGPILSPSVEGIVLVPICPHTVSSRPIIIDNKSTISLKFPKITPKLTIRCDNQNPIYIDKEKEIFIQRSNHILDLIHPNNYNYFKNLRIKLGWQKNSI.

Catalysis depends on Asp74, which acts as the Proton acceptor. NAD(+) is bound by residues 74 to 75 (DG), Arg79, 148 to 149 (NE), Arg176, Asp178, 189 to 194 (TAYALS), and Gln248.

It belongs to the NAD kinase family. Requires a divalent metal cation as cofactor.

The protein localises to the cytoplasm. It catalyses the reaction NAD(+) + ATP = ADP + NADP(+) + H(+). Involved in the regulation of the intracellular balance of NAD and NADP, and is a key enzyme in the biosynthesis of NADP. Catalyzes specifically the phosphorylation on 2'-hydroxyl of the adenosine moiety of NAD to yield NADP. This chain is NAD kinase, found in Blochmanniella floridana.